Reading from the N-terminus, the 187-residue chain is Peptide methionine sulfoxide reductase A2-1 (187 aa).

Belongs to the MsrA Met sulfoxide reductase family.

The protein localises to the cytoplasm. It is found in the cytosol. It catalyses the reaction L-methionyl-[protein] + [thioredoxin]-disulfide + H2O = L-methionyl-(S)-S-oxide-[protein] + [thioredoxin]-dithiol. The enzyme catalyses [thioredoxin]-disulfide + L-methionine + H2O = L-methionine (S)-S-oxide + [thioredoxin]-dithiol. Functionally, catalyzes the reduction of methionine sulfoxide (MetSO) to methionine in proteins. Plays a protective role against oxidative stress by restoring activity to proteins that have been inactivated by methionine oxidation. MSRA family specifically reduces the MetSO S-enantiomer. The chain is Peptide methionine sulfoxide reductase A2-1 (MSRA2-1) from Oryza sativa subsp. japonica (Rice).